Consider the following 335-residue polypeptide: Glycerol-3-phosphate dehydrogenase [NAD(P)+] (335 aa).

The NADPH site is built by serine 10, phenylalanine 11, arginine 31, and lysine 105. Sn-glycerol 3-phosphate contacts are provided by lysine 105, glycine 136, and serine 138. Alanine 140 contacts NADPH. Lysine 191, aspartate 244, serine 254, arginine 255, and asparagine 256 together coordinate sn-glycerol 3-phosphate. Residue lysine 191 is the Proton acceptor of the active site. Residue arginine 255 coordinates NADPH. Residues valine 279 and glutamate 281 each coordinate NADPH.

Belongs to the NAD-dependent glycerol-3-phosphate dehydrogenase family.

The protein localises to the cytoplasm. It catalyses the reaction sn-glycerol 3-phosphate + NAD(+) = dihydroxyacetone phosphate + NADH + H(+). The enzyme catalyses sn-glycerol 3-phosphate + NADP(+) = dihydroxyacetone phosphate + NADPH + H(+). The protein operates within membrane lipid metabolism; glycerophospholipid metabolism. Its function is as follows. Catalyzes the reduction of the glycolytic intermediate dihydroxyacetone phosphate (DHAP) to sn-glycerol 3-phosphate (G3P), the key precursor for phospholipid synthesis. This chain is Glycerol-3-phosphate dehydrogenase [NAD(P)+], found in Leptospira interrogans serogroup Icterohaemorrhagiae serovar Lai (strain 56601).